The sequence spans 201 residues: Small ribosomal subunit protein uS4 (201 aa).

Positions 28–47 (KKNYPPGQHGNSRKRKTSEY) are disordered. One can recognise an S4 RNA-binding domain in the interval 92–155 (GRLDNIVFRL…KSLEVIANSL (64 aa)).

Belongs to the universal ribosomal protein uS4 family. As to quaternary structure, part of the 30S ribosomal subunit. Contacts protein S5. The interaction surface between S4 and S5 is involved in control of translational fidelity.

One of the primary rRNA binding proteins, it binds directly to 16S rRNA where it nucleates assembly of the body of the 30S subunit. Functionally, with S5 and S12 plays an important role in translational accuracy. The sequence is that of Small ribosomal subunit protein uS4 from Bacteroides fragilis (strain YCH46).